The primary structure comprises 38 residues: Photosystem II reaction center protein L (38 aa).

Residues 17–37 (SLYFGLLLIFVLAVLFSSYIF) form a helical membrane-spanning segment.

It belongs to the PsbL family. As to quaternary structure, PSII is composed of 1 copy each of membrane proteins PsbA, PsbB, PsbC, PsbD, PsbE, PsbF, PsbH, PsbI, PsbJ, PsbK, PsbL, PsbM, PsbT, PsbX, PsbY, PsbZ, Psb30/Ycf12, at least 3 peripheral proteins of the oxygen-evolving complex and a large number of cofactors. It forms dimeric complexes.

It localises to the plastid. Its subcellular location is the chloroplast thylakoid membrane. One of the components of the core complex of photosystem II (PSII). PSII is a light-driven water:plastoquinone oxidoreductase that uses light energy to abstract electrons from H(2)O, generating O(2) and a proton gradient subsequently used for ATP formation. It consists of a core antenna complex that captures photons, and an electron transfer chain that converts photonic excitation into a charge separation. This subunit is found at the monomer-monomer interface and is required for correct PSII assembly and/or dimerization. This Chlamydomonas moewusii (Chlamydomonas eugametos) protein is Photosystem II reaction center protein L.